The sequence spans 256 residues: Flap endonuclease Xni (256 aa).

D105 lines the Mg(2+) pocket. A 5'-3' exonuclease domain is found at S164–V250. 5 residues coordinate K(+): M172, A173, P181, I183, and I186. Residues G185 to S190 form an interaction with DNA region.

It belongs to the Xni family. Requires Mg(2+) as cofactor. It depends on K(+) as a cofactor.

Its function is as follows. Has flap endonuclease activity. During DNA replication, flap endonucleases cleave the 5'-overhanging flap structure that is generated by displacement synthesis when DNA polymerase encounters the 5'-end of a downstream Okazaki fragment. The protein is Flap endonuclease Xni of Shewanella loihica (strain ATCC BAA-1088 / PV-4).